The following is a 263-amino-acid chain: Small ribosomal subunit protein eS4 (263 aa).

An S4 RNA-binding domain is found at 42 to 104; that stretch reads LPLIIFLRNK…TGENFRLIYD (63 aa). Lys-230 participates in a covalent cross-link: Glycyl lysine isopeptide (Lys-Gly) (interchain with G-Cter in SUMO2). At Lys-233 the chain carries N6-acetyllysine.

This sequence belongs to the eukaryotic ribosomal protein eS4 family. Component of the small ribosomal subunit. Part of the small subunit (SSU) processome, composed of more than 70 proteins and the RNA chaperone small nucleolar RNA (snoRNA) U3. Identified in a IGF2BP1-dependent mRNP granule complex containing untranslated mRNAs.

It is found in the cytoplasm. The protein localises to the nucleus. It localises to the nucleolus. Component of the small ribosomal subunit. The ribosome is a large ribonucleoprotein complex responsible for the synthesis of proteins in the cell. Part of the small subunit (SSU) processome, first precursor of the small eukaryotic ribosomal subunit. During the assembly of the SSU processome in the nucleolus, many ribosome biogenesis factors, an RNA chaperone and ribosomal proteins associate with the nascent pre-rRNA and work in concert to generate RNA folding, modifications, rearrangements and cleavage as well as targeted degradation of pre-ribosomal RNA by the RNA exosome. The sequence is that of Small ribosomal subunit protein eS4 (RPS4X) from Oryctolagus cuniculus (Rabbit).